We begin with the raw amino-acid sequence, 61 residues long: Small ribosomal subunit protein uS14 (61 aa).

Positions 24, 27, 40, and 43 each coordinate Zn(2+).

It belongs to the universal ribosomal protein uS14 family. Zinc-binding uS14 subfamily. In terms of assembly, part of the 30S ribosomal subunit. Contacts proteins S3 and S10. Zn(2+) is required as a cofactor.

Binds 16S rRNA, required for the assembly of 30S particles and may also be responsible for determining the conformation of the 16S rRNA at the A site. This is Small ribosomal subunit protein uS14 from Mycobacterium avium (strain 104).